The chain runs to 617 residues: Protein fem-1 homolog C (617 aa).

Residue methionine 1 is modified to N-acetylmethionine. 7 ANK repeats span residues 2–31 (DLKT…KAEV), 40–70 (NGAT…SIEV), 82–111 (EGAP…SVNN), 115–144 (TNST…DLEV), 148–177 (HGHT…DVNR), 181–210 (KGNT…KMEK), and 213–242 (YGMT…TSKT). 2 TPR repeats span residues 245-279 (INAL…RYSD) and 338-371 (SYYI…QQSN). 2 ANK repeats span residues 481–523 (NNFS…DVNV) and 527–556 (DDNS…HFDA).

It belongs to the fem-1 family. In terms of assembly, component of a Cul2-RING (CRL2) E3 ubiquitin-protein ligase complex, also named ECS (Elongin BC-CUL2/5-SOCS-box protein) complex, composed of CUL2, Elongin BC (ELOB and ELOC), RBX1 and substrate-specific adapter FEM1C. Widely expressed. Expressed at higher level in testis.

It participates in protein modification; protein ubiquitination. Its function is as follows. Substrate-recognition component of a Cul2-RING (CRL2) E3 ubiquitin-protein ligase complex of the DesCEND (destruction via C-end degrons) pathway, which recognizes a C-degron located at the extreme C terminus of target proteins, leading to their ubiquitination and degradation. The C-degron recognized by the DesCEND pathway is usually a motif of less than ten residues and can be present in full-length proteins, truncated proteins or proteolytically cleaved forms. The CRL2(FEM1C) complex specifically recognizes proteins with an arginine at the C-terminus: recognizes and binds proteins ending with -Lys/Arg-Xaa-Arg and -Lys/Arg-Xaa-Xaa-Arg C-degrons, such as SIL1 or OR51B2, leading to their ubiquitination and degradation. The CRL2(FEM1C) complex mediates ubiquitination and degradation of truncated MSRB1/SEPX1 selenoproteins produced by failed UGA/Sec decoding. Promotes ubiquitination and degradation of SLBP. The sequence is that of Protein fem-1 homolog C from Mus musculus (Mouse).